The following is a 356-amino-acid chain: Heparan sulfate 2-O-sulfotransferase 1 (356 aa).

At 1-11 (MGLLRIMMPPK) the chain is on the cytoplasmic side. Residues 12–28 (LQLLAVVAFAVAMLFLE) form a helical; Signal-anchor for type II membrane protein membrane-spanning segment. Residues 24 to 51 (MLFLENQIQKLEESRSKLERAIARHEVR) are a coiled coil. Over 29-356 (NQIQKLEESR…FYEKIYPKSN (328 aa)) the chain is Lumenal. 6 residues coordinate adenosine 3',5'-bisphosphate: Lys-83, Thr-84, Ala-85, Ser-86, Thr-87, and Ser-88. Residues Asn-108 and Asn-127 are each glycosylated (N-linked (GlcNAc...) asparagine). Active-site residues include His-140 and His-142. Adenosine 3',5'-bisphosphate is bound by residues Arg-164 and Ser-172. Intrachain disulfides connect Cys-201/Cys-209 and Cys-222/Cys-228. 4 residues coordinate adenosine 3',5'-bisphosphate: Tyr-279, Ser-285, Thr-290, and Lys-293.

This sequence belongs to the sulfotransferase 3 family. As to quaternary structure, homotrimer. Interacts with the C5-epimerase GLCE. N-glycosylated.

The protein localises to the golgi apparatus membrane. Its function is as follows. Catalyzes the transfer of a sulfo group from 3'-phospho-5'-adenylyl sulfate (PAPS) to the 2-OH position of iduronic acid (IdoA) or glucuronic acid (GlcA) within the heparan sulfate (HS) chain and participates in HS biosynthesis. Required for metanephric development of kidney formation, suggesting that 2-O-sulfation within HS is essential for signaling between ureteric bud and metanephric mesenchyme. The chain is Heparan sulfate 2-O-sulfotransferase 1 from Homo sapiens (Human).